The chain runs to 713 residues: Protein tyrosine phosphatase domain-containing protein 1 (713 aa).

One can recognise a Tyrosine-protein phosphatase domain in the interval 80–251; it reads YSSWITDHLL…LVPLRSVFSC (172 aa). Cysteine 188 functions as the Phosphocysteine intermediate in the catalytic mechanism.

This sequence belongs to the protein-tyrosine phosphatase family. Non-receptor class PTPDC1 subfamily.

In terms of biological role, may play roles in cilia formation and/or maintenance. The protein is Protein tyrosine phosphatase domain-containing protein 1 (ptpdc1) of Danio rerio (Zebrafish).